A 140-amino-acid polypeptide reads, in one-letter code: Putative nickel-responsive regulator 3 (140 aa).

Residues His81, His92, His94, and Cys100 each coordinate Ni(2+).

Belongs to the transcriptional regulatory CopG/NikR family. Requires Ni(2+) as cofactor.

In terms of biological role, transcriptional regulator. This chain is Putative nickel-responsive regulator 3, found in Methanosarcina acetivorans (strain ATCC 35395 / DSM 2834 / JCM 12185 / C2A).